The sequence spans 201 residues: Ras-related protein RabA (201 aa).

15–22 (GDSGVGKS) provides a ligand contact to GTP. Positions 37-45 (YISTIGVDF) match the Effector region motif. GTP-binding positions include 63–67 (DTAGQ) and 121–124 (NKSD). C198 is subject to Cysteine methyl ester. A lipid anchor (S-geranylgeranyl cysteine) is attached at C198. Residues 199–201 (IIN) constitute a propeptide, removed in mature form.

The protein belongs to the small GTPase superfamily. Rab family.

It localises to the cell membrane. The protein is Ras-related protein RabA (rabA) of Dictyostelium discoideum (Social amoeba).